The sequence spans 240 residues: 1-(5-phosphoribosyl)-5-[(5-phosphoribosylamino)methylideneamino] imidazole-4-carboxamide isomerase 1 (240 aa).

The Proton acceptor role is filled by aspartate 8. Aspartate 129 serves as the catalytic Proton donor.

The protein belongs to the HisA/HisF family.

Its subcellular location is the cytoplasm. It catalyses the reaction 1-(5-phospho-beta-D-ribosyl)-5-[(5-phospho-beta-D-ribosylamino)methylideneamino]imidazole-4-carboxamide = 5-[(5-phospho-1-deoxy-D-ribulos-1-ylimino)methylamino]-1-(5-phospho-beta-D-ribosyl)imidazole-4-carboxamide. It functions in the pathway amino-acid biosynthesis; L-histidine biosynthesis; L-histidine from 5-phospho-alpha-D-ribose 1-diphosphate: step 4/9. The protein is 1-(5-phosphoribosyl)-5-[(5-phosphoribosylamino)methylideneamino] imidazole-4-carboxamide isomerase 1 of Ruegeria pomeroyi (strain ATCC 700808 / DSM 15171 / DSS-3) (Silicibacter pomeroyi).